We begin with the raw amino-acid sequence, 330 residues long: Copper-containing nitrite reductase (330 aa).

Plastocyanin-like domains are found at residues 1–165 (GLPR…YDRV) and 166–330 (YTIG…PGPA). Residues His85, His90, His125, Cys126, His135, Met140, and His296 each coordinate Cu cation.

It belongs to the multicopper oxidase family. As to quaternary structure, homotrimer. Cu(2+) is required as a cofactor. The cofactor is Cu(+). Requires FAD as cofactor.

It localises to the periplasm. It catalyses the reaction nitric oxide + Fe(III)-[cytochrome c] + H2O = Fe(II)-[cytochrome c] + nitrite + 2 H(+). It functions in the pathway nitrogen metabolism; nitrate reduction (denitrification); dinitrogen from nitrate: step 2/4. This Alcaligenes xylosoxydans xylosoxydans (Achromobacter xylosoxidans) protein is Copper-containing nitrite reductase (nirK).